A 321-amino-acid chain; its full sequence is MTQNTFFPIFPHQHLLGIKDLNVQDLIVLLDRANANIPFSKKIDKKQSPLHGCTQINLFFEASTRTQSSFELAGKRLGADVMSMPIGNSSVKKGETLIDTATTLNAMKPDILVIRHSCAGAAALLAQKVDCCIINAGDGAHEHPTQALLDALTIKRAKGRIEGLTVVICGDILHSRVARSNILSLNALGARVRAVAPSTLLPAGIADMGVEVYNTMKEGLKGADVIMMLRLQRERMTDSFIPSIREYFHYFGLHKENLSYAKSDCIILHPGPINRGIEIASDIADGPQSMIHTQVEMGIAVRMAVMEALLDSRLKASGEKK.

Arg-65 and Thr-66 together coordinate carbamoyl phosphate. Lys-93 lines the L-aspartate pocket. Carbamoyl phosphate contacts are provided by Arg-115, His-143, and Gln-146. L-aspartate contacts are provided by Arg-176 and Arg-230. Gly-271 and Pro-272 together coordinate carbamoyl phosphate.

It belongs to the aspartate/ornithine carbamoyltransferase superfamily. ATCase family. As to quaternary structure, heterododecamer (2C3:3R2) of six catalytic PyrB chains organized as two trimers (C3), and six regulatory PyrI chains organized as three dimers (R2).

The catalysed reaction is carbamoyl phosphate + L-aspartate = N-carbamoyl-L-aspartate + phosphate + H(+). The protein operates within pyrimidine metabolism; UMP biosynthesis via de novo pathway; (S)-dihydroorotate from bicarbonate: step 2/3. Its function is as follows. Catalyzes the condensation of carbamoyl phosphate and aspartate to form carbamoyl aspartate and inorganic phosphate, the committed step in the de novo pyrimidine nucleotide biosynthesis pathway. This Bartonella quintana (strain Toulouse) (Rochalimaea quintana) protein is Aspartate carbamoyltransferase catalytic subunit.